Consider the following 189-residue polypeptide: Potassium-transporting ATPase KdpC subunit (189 aa).

Residues 10–30 form a helical membrane-spanning segment; the sequence is VIFAMLTLICGVIYPYAITGI.

It belongs to the KdpC family. In terms of assembly, the system is composed of three essential subunits: KdpA, KdpB and KdpC.

The protein resides in the cell inner membrane. Functionally, part of the high-affinity ATP-driven potassium transport (or Kdp) system, which catalyzes the hydrolysis of ATP coupled with the electrogenic transport of potassium into the cytoplasm. This subunit acts as a catalytic chaperone that increases the ATP-binding affinity of the ATP-hydrolyzing subunit KdpB by the formation of a transient KdpB/KdpC/ATP ternary complex. This chain is Potassium-transporting ATPase KdpC subunit, found in Janthinobacterium sp. (strain Marseille) (Minibacterium massiliensis).